We begin with the raw amino-acid sequence, 209 residues long: Pyridoxal 5'-phosphate synthase subunit PdxT (209 aa).

An L-glutamine-binding site is contributed by 58-60; sequence GES. Cys-90 acts as the Nucleophile in catalysis. L-glutamine contacts are provided by residues Arg-119 and 148 to 149; that span reads IR. Active-site charge relay system residues include His-185 and Glu-187.

This sequence belongs to the glutaminase PdxT/SNO family. In the presence of PdxS, forms a dodecamer of heterodimers. Only shows activity in the heterodimer.

The enzyme catalyses aldehydo-D-ribose 5-phosphate + D-glyceraldehyde 3-phosphate + L-glutamine = pyridoxal 5'-phosphate + L-glutamate + phosphate + 3 H2O + H(+). It catalyses the reaction L-glutamine + H2O = L-glutamate + NH4(+). The protein operates within cofactor biosynthesis; pyridoxal 5'-phosphate biosynthesis. In terms of biological role, catalyzes the hydrolysis of glutamine to glutamate and ammonia as part of the biosynthesis of pyridoxal 5'-phosphate. The resulting ammonia molecule is channeled to the active site of PdxS. This is Pyridoxal 5'-phosphate synthase subunit PdxT from Clavibacter michiganensis subsp. michiganensis (strain NCPPB 382).